The following is a 277-amino-acid chain: Phosphatidylglycerol--prolipoprotein diacylglyceryl transferase (277 aa).

4 helical membrane-spanning segments follow: residues 18–38 (ISVK…LLLA), 51–71 (IIVD…RIYY), 89–109 (IWHG…TAII), and 116–136 (ISFW…QAIG). Arg-137 is an a 1,2-diacyl-sn-glycero-3-phospho-(1'-sn-glycerol) binding site. The next 3 helical transmembrane spans lie at 177-197 (QPTF…LLII), 205-225 (GELF…IEGM), and 235-255 (FRVS…IIIY).

Belongs to the Lgt family.

Its subcellular location is the cell membrane. The enzyme catalyses L-cysteinyl-[prolipoprotein] + a 1,2-diacyl-sn-glycero-3-phospho-(1'-sn-glycerol) = an S-1,2-diacyl-sn-glyceryl-L-cysteinyl-[prolipoprotein] + sn-glycerol 1-phosphate + H(+). The protein operates within protein modification; lipoprotein biosynthesis (diacylglyceryl transfer). In terms of biological role, catalyzes the transfer of the diacylglyceryl group from phosphatidylglycerol to the sulfhydryl group of the N-terminal cysteine of a prolipoprotein, the first step in the formation of mature lipoproteins. The polypeptide is Phosphatidylglycerol--prolipoprotein diacylglyceryl transferase (Listeria monocytogenes serovar 1/2a (strain ATCC BAA-679 / EGD-e)).